Here is a 322-residue protein sequence, read N- to C-terminus: Endochitinase (322 aa).

The N-terminal stretch at 1–21 (MKMRYCVLVSVLAILVIRGSA) is a signal peptide. Positions 22–62 (ENCGRQAGGALCPGGQCCSKWGWCGTTPDHCGTDCQSQCGG) constitute a Chitin-binding type-1 domain. Intrachain disulfides connect cysteine 24–cysteine 39, cysteine 33–cysteine 45, cysteine 38–cysteine 52, and cysteine 56–cysteine 60.

This sequence belongs to the glycosyl hydrolase 19 family. Chitinase class I subfamily.

The catalysed reaction is Random endo-hydrolysis of N-acetyl-beta-D-glucosaminide (1-&gt;4)-beta-linkages in chitin and chitodextrins.. Defense against chitin-containing fungal pathogens. The chain is Endochitinase from Actinidia chinensis var. chinensis (Chinese soft-hair kiwi).